The chain runs to 372 residues: GDP-mannose 4,6 dehydratase (372 aa).

Residues 1–20 form a disordered region; the sequence is MAHAPARCPSARGSGDGEMG. A2 is modified (N-acetylalanine). NADP(+) is bound by residues 30 to 35, 55 to 58, 86 to 87, 108 to 112, and Y123; these read GITGQD, RRSS, DL, and LGAQS. Residue T155 is part of the active site. Residues E157 and Y179 each act as nucleophile in the active site. Residues K183, H209, and R214 each coordinate NADP(+). Y323 is modified (phosphotyrosine).

The protein belongs to the NAD(P)-dependent epimerase/dehydratase family. GDP-mannose 4,6-dehydratase subfamily. NADP(+) serves as cofactor. Highly expressed in pancreas and small intestine. Expressed in thymus, protstate, colon, heart, placenta, liver and kidney. Expressed at low levels in spleen, testis, brain and lung.

The catalysed reaction is GDP-alpha-D-mannose = GDP-4-dehydro-alpha-D-rhamnose + H2O. The protein operates within nucleotide-sugar biosynthesis; GDP-L-fucose biosynthesis via de novo pathway; GDP-L-fucose from GDP-alpha-D-mannose: step 1/2. Its activity is regulated as follows. Inhibited by GDP-fucose. Its function is as follows. Catalyzes the conversion of GDP-D-mannose to GDP-4-dehydro-6-deoxy-D-mannose. The sequence is that of GDP-mannose 4,6 dehydratase from Homo sapiens (Human).